A 429-amino-acid chain; its full sequence is Tryptophan synthase beta chain 2 (429 aa).

Positions 18 to 40 (NINPDLPSPLPEPKNPEGGKNIE) are disordered. Lys110 carries the post-translational modification N6-(pyridoxal phosphate)lysine.

This sequence belongs to the TrpB family. As to quaternary structure, tetramer of two alpha and two beta chains. Pyridoxal 5'-phosphate is required as a cofactor.

The catalysed reaction is (1S,2R)-1-C-(indol-3-yl)glycerol 3-phosphate + L-serine = D-glyceraldehyde 3-phosphate + L-tryptophan + H2O. The protein operates within amino-acid biosynthesis; L-tryptophan biosynthesis; L-tryptophan from chorismate: step 5/5. In terms of biological role, the beta subunit is responsible for the synthesis of L-tryptophan from indole and L-serine. The sequence is that of Tryptophan synthase beta chain 2 (trpB2) from Methanothermobacter thermautotrophicus (strain ATCC 29096 / DSM 1053 / JCM 10044 / NBRC 100330 / Delta H) (Methanobacterium thermoautotrophicum).